The chain runs to 1407 residues: DNA-directed RNA polymerase subunit beta' (1407 aa).

Residues C70, C72, C85, and C88 each coordinate Zn(2+). The Mg(2+) site is built by D460, D462, and D464. 4 residues coordinate Zn(2+): C814, C889, C896, and C899. Residues 1384–1407 (LVGRSTSSGTEVTSPSKDAIPLGG) are disordered. Residues 1386–1399 (GRSTSSGTEVTSPS) show a composition bias toward polar residues.

It belongs to the RNA polymerase beta' chain family. In terms of assembly, the RNAP catalytic core consists of 2 alpha, 1 beta, 1 beta' and 1 omega subunit. When a sigma factor is associated with the core the holoenzyme is formed, which can initiate transcription. Mg(2+) serves as cofactor. It depends on Zn(2+) as a cofactor.

The catalysed reaction is RNA(n) + a ribonucleoside 5'-triphosphate = RNA(n+1) + diphosphate. Functionally, DNA-dependent RNA polymerase catalyzes the transcription of DNA into RNA using the four ribonucleoside triphosphates as substrates. The chain is DNA-directed RNA polymerase subunit beta' from Xylella fastidiosa (strain Temecula1 / ATCC 700964).